The primary structure comprises 779 residues: Phosphoribosylformylglycinamidine synthase subunit PurL (779 aa).

H52 is an active-site residue. Positions 55 and 94 each coordinate ATP. A Mg(2+)-binding site is contributed by E96. Substrate is bound by residues 97 to 100 and R119; that span reads SHNH. H98 functions as the Proton acceptor in the catalytic mechanism. Residue D120 coordinates Mg(2+). Q243 is a binding site for substrate. Position 271 (D271) interacts with Mg(2+). 315–317 lines the substrate pocket; that stretch reads ESQ. ATP is bound by residues N523 and G560. N561 lines the Mg(2+) pocket. Residue S563 coordinates substrate.

The protein belongs to the FGAMS family. As to quaternary structure, monomer. Part of the FGAM synthase complex composed of 1 PurL, 1 PurQ and 2 PurS subunits.

The protein resides in the cytoplasm. The enzyme catalyses N(2)-formyl-N(1)-(5-phospho-beta-D-ribosyl)glycinamide + L-glutamine + ATP + H2O = 2-formamido-N(1)-(5-O-phospho-beta-D-ribosyl)acetamidine + L-glutamate + ADP + phosphate + H(+). It participates in purine metabolism; IMP biosynthesis via de novo pathway; 5-amino-1-(5-phospho-D-ribosyl)imidazole from N(2)-formyl-N(1)-(5-phospho-D-ribosyl)glycinamide: step 1/2. Functionally, part of the phosphoribosylformylglycinamidine synthase complex involved in the purines biosynthetic pathway. Catalyzes the ATP-dependent conversion of formylglycinamide ribonucleotide (FGAR) and glutamine to yield formylglycinamidine ribonucleotide (FGAM) and glutamate. The FGAM synthase complex is composed of three subunits. PurQ produces an ammonia molecule by converting glutamine to glutamate. PurL transfers the ammonia molecule to FGAR to form FGAM in an ATP-dependent manner. PurS interacts with PurQ and PurL and is thought to assist in the transfer of the ammonia molecule from PurQ to PurL. The polypeptide is Phosphoribosylformylglycinamidine synthase subunit PurL (Prochlorococcus marinus (strain MIT 9515)).